An 826-amino-acid polypeptide reads, in one-letter code: Lon protease (826 aa).

The span at 1–20 (MSEEELNNRDTESKQEHDEN) shows a compositional bias: basic and acidic residues. The interval 1-27 (MSEEELNNRDTESKQEHDENNSNFEAG) is disordered. In terms of domain architecture, Lon N-terminal spans 33-231 (LPVLPLREVI…KVHALLEKEL (199 aa)). 384-391 (GPPGVGKT) lines the ATP pocket. In terms of domain architecture, Lon proteolytic spans 620 to 801 (ENLVGMTTGL…SEALTFTLAE (182 aa)). Residues Ser707 and Lys750 contribute to the active site.

It belongs to the peptidase S16 family. Homohexamer. Organized in a ring with a central cavity.

Its subcellular location is the cytoplasm. It carries out the reaction Hydrolysis of proteins in presence of ATP.. In terms of biological role, ATP-dependent serine protease that mediates the selective degradation of mutant and abnormal proteins as well as certain short-lived regulatory proteins. Required for cellular homeostasis and for survival from DNA damage and developmental changes induced by stress. Degrades polypeptides processively to yield small peptide fragments that are 5 to 10 amino acids long. Binds to DNA in a double-stranded, site-specific manner. The polypeptide is Lon protease (Neorickettsia sennetsu (strain ATCC VR-367 / Miyayama) (Ehrlichia sennetsu)).